Here is a 362-residue protein sequence, read N- to C-terminus: Endopolygalacturonase II (362 aa).

The signal sequence occupies residues 1–21 (MHSFASLLAYGLAASATLASA). A propeptide spanning residues 22 to 27 (SPIEAR) is cleaved from the precursor. C30 and C45 are joined by a disulfide. Residues 156-186 (ADDITLTDITINNADGDTLGGHNTDAFDVGN) form a PbH1 1 repeat. The active-site Proton donor is the D201. A disulfide bond links C203 and C219. Residue H223 is part of the active site. PbH1 repeat units follow at residues 238–259 (VKNV…RIKT), 267–289 (VSEI…VIQQ), and 301–322 (TNGV…DSKA). The N-linked (GlcNAc...) (high mannose) asparagine glycan is linked to N240. Cystine bridges form between C329-C334 and C353-C362.

It belongs to the glycosyl hydrolase 28 family.

It localises to the secreted. The catalysed reaction is (1,4-alpha-D-galacturonosyl)n+m + H2O = (1,4-alpha-D-galacturonosyl)n + (1,4-alpha-D-galacturonosyl)m.. Involved in maceration and soft-rotting of plant tissue. Hydrolyzes the 1,4-alpha glycosidic bonds of de-esterified pectate in the smooth region of the plant cell wall. The polypeptide is Endopolygalacturonase II (Aspergillus niger).